The primary structure comprises 209 residues: Thiamine-phosphate synthase (209 aa).

4-amino-2-methyl-5-(diphosphooxymethyl)pyrimidine contacts are provided by residues 41–45 (QLREK) and Asn73. Residues Asp74 and Asp93 each coordinate Mg(2+). Ser112 contacts 4-amino-2-methyl-5-(diphosphooxymethyl)pyrimidine. Residue 138 to 140 (TGT) coordinates 2-[(2R,5Z)-2-carboxy-4-methylthiazol-5(2H)-ylidene]ethyl phosphate. Position 141 (Lys141) interacts with 4-amino-2-methyl-5-(diphosphooxymethyl)pyrimidine. 2-[(2R,5Z)-2-carboxy-4-methylthiazol-5(2H)-ylidene]ethyl phosphate-binding positions include Gly168 and 188 to 189 (VS).

This sequence belongs to the thiamine-phosphate synthase family. Mg(2+) is required as a cofactor.

It catalyses the reaction 2-[(2R,5Z)-2-carboxy-4-methylthiazol-5(2H)-ylidene]ethyl phosphate + 4-amino-2-methyl-5-(diphosphooxymethyl)pyrimidine + 2 H(+) = thiamine phosphate + CO2 + diphosphate. The catalysed reaction is 2-(2-carboxy-4-methylthiazol-5-yl)ethyl phosphate + 4-amino-2-methyl-5-(diphosphooxymethyl)pyrimidine + 2 H(+) = thiamine phosphate + CO2 + diphosphate. It carries out the reaction 4-methyl-5-(2-phosphooxyethyl)-thiazole + 4-amino-2-methyl-5-(diphosphooxymethyl)pyrimidine + H(+) = thiamine phosphate + diphosphate. It participates in cofactor biosynthesis; thiamine diphosphate biosynthesis; thiamine phosphate from 4-amino-2-methyl-5-diphosphomethylpyrimidine and 4-methyl-5-(2-phosphoethyl)-thiazole: step 1/1. In terms of biological role, condenses 4-methyl-5-(beta-hydroxyethyl)thiazole monophosphate (THZ-P) and 2-methyl-4-amino-5-hydroxymethyl pyrimidine pyrophosphate (HMP-PP) to form thiamine monophosphate (TMP). The chain is Thiamine-phosphate synthase from Alkaliphilus oremlandii (strain OhILAs) (Clostridium oremlandii (strain OhILAs)).